We begin with the raw amino-acid sequence, 517 residues long: Perilipin-1 (517 aa).

A Phosphoserine modification is found at Ser-81. Phosphothreonine is present on Thr-85. Ser-126, Ser-130, Ser-132, Ser-137, and Ser-174 each carry phosphoserine. A disordered region spans residues 197 to 217 (VESAPSSGRQKTQKAPKAKPS). Thr-224, Thr-299, and Thr-301 each carry phosphothreonine. The tract at residues 285–321 (HNLAASKDENHEDQTDTEGEETDEEEEEEESEAEENV) is disordered. The tract at residues 291 to 322 (KDENHEDQTDTEGEETDEEEEEEESEAEENVL) is required for interaction with CIDEC. Residues 299–319 (TDTEGEETDEEEEEEESEAEE) show a composition bias toward acidic residues. A phosphoserine mark is found at Ser-315, Ser-385, Ser-387, Pro-408, Ser-411, Ser-434, Ser-436, Ser-440, Ser-460, Ser-492, and Ser-494. The disordered stretch occupies residues 415–495 (PESEFQDIDN…KPARRVSDSF (81 aa)). A compositionally biased stretch (basic and acidic residues) spans 483 to 492 (PREKPARRVS).

Belongs to the perilipin family. Interacts with ABHD5. Interacts with CIDEC. Interacts with AQP7. Post-translationally, major cAMP-dependent protein kinase substrate in adipocytes, also dephosphorylated by PP1. When phosphorylated, may be maximally sensitive to HSL. When unphosphorylated, may play a role in the inhibition of lipolysis, by acting as a barrier in lipid droplet. The N-terminus is blocked. In terms of tissue distribution, adipocytes.

The protein localises to the endoplasmic reticulum. It localises to the lipid droplet. Its function is as follows. Modulator of adipocyte lipid metabolism. Coats lipid storage droplets to protect them from breakdown by hormone-sensitive lipase (HSL). Its absence may result in leanness. Plays a role in unilocular lipid droplet formation by activating CIDEC. Their interaction promotes lipid droplet enlargement and directional net neutral lipid transfer. May modulate lipolysis and triglyceride levels. The sequence is that of Perilipin-1 (Plin1) from Rattus norvegicus (Rat).